The following is a 513-amino-acid chain: Beta-glucosidase 5 (513 aa).

The N-terminal stretch at 1–26 (MAAAIAVVYLSLLLLLLHGAAPAVLG) is a signal peptide. Residue glutamine 46 coordinates a beta-D-glucoside. Glutamate 192 functions as the Proton donor in the catalytic mechanism. Cysteine 211 and cysteine 220 are joined by a disulfide. N-linked (GlcNAc...) asparagine glycans are attached at residues asparagine 224 and asparagine 273. A beta-D-glucoside is bound by residues tyrosine 336 and glutamate 405. Glutamate 405 serves as the catalytic Nucleophile. Asparagine 412 carries N-linked (GlcNAc...) asparagine glycosylation. Residues tryptophan 447, 454-455 (EY), and tyrosine 463 contribute to the a beta-D-glucoside site.

This sequence belongs to the glycosyl hydrolase 1 family.

It carries out the reaction Hydrolysis of terminal, non-reducing beta-D-glucosyl residues with release of beta-D-glucose.. The chain is Beta-glucosidase 5 (BGLU5) from Oryza sativa subsp. japonica (Rice).